The primary structure comprises 199 residues: Large ribosomal subunit protein uL4 (199 aa).

The protein belongs to the universal ribosomal protein uL4 family. In terms of assembly, part of the 50S ribosomal subunit.

One of the primary rRNA binding proteins, this protein initially binds near the 5'-end of the 23S rRNA. It is important during the early stages of 50S assembly. It makes multiple contacts with different domains of the 23S rRNA in the assembled 50S subunit and ribosome. In terms of biological role, forms part of the polypeptide exit tunnel. This chain is Large ribosomal subunit protein uL4, found in Aquifex aeolicus (strain VF5).